A 351-amino-acid polypeptide reads, in one-letter code: Autoinducer 2 import system permease protein LsrC (351 aa).

Transmembrane regions (helical) follow at residues 14-34 (LLAI…YFSL), 39-59 (MIFS…LVML), 70-90 (ITGL…GLVA), 93-113 (LFAL…VTWL), 115-135 (IPAI…MLLL), 155-175 (ILFS…SMAW), 213-233 (MNGV…GFIP), 252-272 (GISL…AFLL), and 284-304 (LPAW…LVFD).

It belongs to the binding-protein-dependent transport system permease family. AraH/RbsC subfamily. The complex is composed of two ATP-binding proteins (LsrA), two transmembrane proteins (LsrC and LsrD) and a solute-binding protein (LsrB).

Its subcellular location is the cell inner membrane. Functionally, part of the ABC transporter complex LsrABCD involved in autoinducer 2 (AI-2) import. Probably responsible for the translocation of the substrate across the membrane. The polypeptide is Autoinducer 2 import system permease protein LsrC (lsrC) (Yersinia pseudotuberculosis serotype IB (strain PB1/+)).